Consider the following 735-residue polypeptide: Alpha-adducin (735 aa).

M1 carries the N-acetylmethionine modification. The segment covering 1–11 (MNGDTRAAVVT) has biased composition (low complexity). The interval 1–21 (MNGDTRAAVVTSPPPTTAPHK) is disordered. Residue S12 is modified to Phosphoserine. A Phosphoserine; by PKA modification is found at S59. Phosphoserine is present on S64. T331 carries the phosphothreonine modification. Phosphoserine is present on residues S334, S353, and S355. T358 is subject to Phosphothreonine. A phosphoserine mark is found at S364 and S366. S408 is modified (phosphoserine; by PKA). 2 disordered regions span residues 418–486 (GHSF…SAVP) and 576–735 (RREV…KSDS). S427 carries the post-translational modification Phosphoserine. At T429 the chain carries Phosphothreonine. Position 431 is a phosphoserine (S431). S436 carries the post-translational modification Phosphoserine; by PKA. Residue T445 is modified to Phosphothreonine; by ROCK2. Phosphoserine occurs at positions 464 and 465. Residue T480 is modified to Phosphothreonine; by ROCK2. Phosphoserine; by PKA is present on S481. Residues 576-601 (RREVERKQKGSEENLDETREQKEKSP) are compositionally biased toward basic and acidic residues. Phosphoserine occurs at positions 586, 600, and 605. T610 is modified (phosphothreonine). S613 is subject to Phosphoserine. Position 614 is a phosphothreonine (T614). A compositionally biased stretch (low complexity) spans 678–712 (EPASASAPGAEEVASPATEEGSPMDPGSDGSPGKS). S705, S708, and S712 each carry phosphoserine. Residues 713–735 (PSKKKKKFRTPSFLKKSKKKSDS) show a composition bias toward basic residues. The residue at position 714 (S714) is a Phosphoserine; by PKC. Residues 715–732 (KKKKKFRTPSFLKKSKKK) are interaction with calmodulin. S724 is subject to Phosphoserine; by PKA and PKC.

It belongs to the aldolase class II family. Adducin subfamily. In terms of assembly, heterodimer of an alpha and a beta subunit or an alpha and a gamma subunit.

The protein resides in the cytoplasm. The protein localises to the cytoskeleton. It is found in the cell membrane. Its function is as follows. Membrane-cytoskeleton-associated protein that promotes the assembly of the spectrin-actin network. Binds to calmodulin. The sequence is that of Alpha-adducin (Add1) from Rattus norvegicus (Rat).